Consider the following 423-residue polypeptide: Protein TylM3 (423 aa).

The span at 1-21 (MNTAAGPTGTAAGGTTAPAAA) shows a compositional bias: low complexity. 2 disordered regions span residues 1 to 26 (MNTAAGPTGTAAGGTTAPAAAHDLSR) and 117 to 149 (GSALDAAHGNPGGPPLPGGWPHRPPDREERDDP). A compositionally biased stretch (basic and acidic residues) spans 139–149 (RPPDREERDDP).

Belongs to the cytochrome P450 family.

The protein operates within antibiotic biosynthesis; tylosin biosynthesis. Involved in the biosynthesis of the macrolide antibiotic tylosin derived from the polyketide lactone tylactone. TylM3 is required for the glycosylation of the 5-hydroxyl group of tylactone to yield 5-O-mycaminosytylactone. This is Protein TylM3 from Streptomyces fradiae (Streptomyces roseoflavus).